The following is a 515-amino-acid chain: Fatty acyl-CoA reductase 2 (515 aa).

At 1–464 (MSTIAAFYGG…KAKQRLKRLR (464 aa)) the chain is on the cytoplasmic side. A helical membrane pass occupies residues 465-484 (NIHYLFNTALFLIAWRLLIA). The Peroxisomal segment spans residues 485–515 (RSQMARNVWFFIVSFCYKFLSYFRASSTLKV).

The protein belongs to the fatty acyl-CoA reductase family.

Its subcellular location is the peroxisome membrane. The enzyme catalyses a long-chain fatty acyl-CoA + 2 NADPH + 2 H(+) = a long-chain primary fatty alcohol + 2 NADP(+) + CoA. It catalyses the reaction a very long-chain fatty acyl-CoA + 2 NADPH + 2 H(+) = a very long-chain primary fatty alcohol + 2 NADP(+) + CoA. The catalysed reaction is an ultra-long-chain fatty acyl-CoA + 2 NADPH + 2 H(+) = an ultra long-chain primary fatty alcohol + 2 NADP(+) + CoA. It carries out the reaction hexadecanoyl-CoA + 2 NADPH + 2 H(+) = hexadecan-1-ol + 2 NADP(+) + CoA. The enzyme catalyses octadecanoyl-CoA + 2 NADPH + 2 H(+) = octadecan-1-ol + 2 NADP(+) + CoA. It catalyses the reaction eicosanoyl-CoA + 2 NADPH + 2 H(+) = eicosan-1-ol + 2 NADP(+) + CoA. The catalysed reaction is docosanoyl-CoA + 2 NADPH + 2 H(+) = docosan-1-ol + 2 NADP(+) + CoA. It carries out the reaction tetracosanoyl-CoA + 2 NADPH + 2 H(+) = tetracosan-1-ol + 2 NADP(+) + CoA. The enzyme catalyses hexacosanoyl-CoA + 2 NADPH + 2 H(+) = hexacosan-1-ol + 2 NADP(+) + CoA. It catalyses the reaction octacosanoyl-CoA + 2 NADPH + 2 H(+) = octacosan-1-ol + 2 NADP(+) + CoA. The catalysed reaction is triacontanoyl-CoA + 2 NADPH + 2 H(+) = triacontan-1-ol + 2 NADP(+) + CoA. It carries out the reaction 18-methylnonadecanoyl-CoA + 2 NADPH + 2 H(+) = 18-methylnonadecan-1-ol + 2 NADP(+) + CoA. The enzyme catalyses 20-methylheneicosanoyl-CoA + 2 NADPH + 2 H(+) = 20-methylheneicosan-1-ol + 2 NADP(+) + CoA. It catalyses the reaction 22-methyltricosanoyl-CoA + 2 NADPH + 2 H(+) = 22-methyltricosan-1-ol + 2 NADP(+) + CoA. The catalysed reaction is 24-methylpentacosanoyl-CoA + 2 NADPH + 2 H(+) = 24-methylpentacosan-1-ol + 2 NADP(+) + CoA. Its function is as follows. Catalyzes the reduction of saturated but not unsaturated C16 or C18 fatty acyl-CoA to fatty alcohols (FAls). A lower activity can be observed with shorter fatty acyl-CoA substrates. Can produce very long-chain and ultra long-chain FAls, regardless of whether they have a straight or branched chain. Involved in the production of ether lipids/plasmalogens and wax monoesters whose synthesis requires FAls as substrates. This is Fatty acyl-CoA reductase 2 from Homo sapiens (Human).